Here is a 137-residue protein sequence, read N- to C-terminus: Putative pre-16S rRNA nuclease (137 aa).

Belongs to the YqgF nuclease family.

It localises to the cytoplasm. In terms of biological role, could be a nuclease involved in processing of the 5'-end of pre-16S rRNA. The protein is Putative pre-16S rRNA nuclease of Actinobacillus pleuropneumoniae serotype 5b (strain L20).